The following is a 1090-amino-acid chain: Protein CHROMATIN REMODELING 24 (1090 aa).

Disordered stretches follow at residues 1-51 (MAEN…MIKL) and 247-273 (VGKQ…NLDR). Residues 44 to 51 (TKKSMIKL) carry the Nuclear localization signal motif. Residues 256–273 (RHFDDNSEDNRQGYNLDR) show a composition bias toward basic and acidic residues. Residues 389 to 564 (WSLHTQGKGG…WALFNFSCPG (176 aa)) enclose the Helicase ATP-binding domain. ATP is bound at residue 402–409 (DDMGLGKT). The short motif at 515–518 (DEGH) is the DEAH box element. The Helicase C-terminal domain maps to 736–895 (FIMSLLENLI…IRYFSQQDLR (160 aa)). A coiled-coil region spans residues 1043 to 1069 (DGGAKIQKQIAELTRELKDMKAAERIN).

This sequence belongs to the SNF2/RAD54 helicase family.

It is found in the nucleus. DNA helicase that acts as an essential component of the spindle assembly checkpoint. Probable chromatin remodeling factor that regulate homologous recombination (HR) and non-homologous recombination (NHR). This is Protein CHROMATIN REMODELING 24 from Arabidopsis thaliana (Mouse-ear cress).